We begin with the raw amino-acid sequence, 513 residues long: 2,3-bisphosphoglycerate-independent phosphoglycerate mutase (513 aa).

Mn(2+) contacts are provided by aspartate 12 and serine 62. The active-site Phosphoserine intermediate is serine 62. Residues histidine 123, 153–154 (RD), arginine 185, arginine 191, 261–264 (RSDR), and lysine 335 contribute to the substrate site. Mn(2+) contacts are provided by aspartate 402, histidine 406, aspartate 443, histidine 444, and histidine 462.

The protein belongs to the BPG-independent phosphoglycerate mutase family. As to quaternary structure, monomer. Mn(2+) is required as a cofactor.

It catalyses the reaction (2R)-2-phosphoglycerate = (2R)-3-phosphoglycerate. The protein operates within carbohydrate degradation; glycolysis; pyruvate from D-glyceraldehyde 3-phosphate: step 3/5. In terms of biological role, catalyzes the interconversion of 2-phosphoglycerate and 3-phosphoglycerate. The chain is 2,3-bisphosphoglycerate-independent phosphoglycerate mutase from Thiobacillus denitrificans (strain ATCC 25259 / T1).